The chain runs to 41 residues: DFVDAHNAARAQVGVGPVHWTVDAYARQYANDRNLVHSATR.

It belongs to the CRISP family.

Probably involved in the defense reaction of plants against pathogens. This Cucumis melo (Muskmelon) protein is Pathogenesis-related protein.